We begin with the raw amino-acid sequence, 271 residues long: Urease accessory protein UreD (271 aa).

The protein belongs to the UreD family. In terms of assembly, ureD, UreF and UreG form a complex that acts as a GTP-hydrolysis-dependent molecular chaperone, activating the urease apoprotein by helping to assemble the nickel containing metallocenter of UreC. The UreE protein probably delivers the nickel.

The protein localises to the cytoplasm. In terms of biological role, required for maturation of urease via the functional incorporation of the urease nickel metallocenter. In Halalkalibacterium halodurans (strain ATCC BAA-125 / DSM 18197 / FERM 7344 / JCM 9153 / C-125) (Bacillus halodurans), this protein is Urease accessory protein UreD.